The sequence spans 2241 residues: MLPCKKRRTTVTESLQHKGNQEENNVDLESAVKPESDQVKDLSSVSLSWDPSHGRVAGFEVQSLQDAGNQLGMEDTSLSSGMLTQNTNVPILEGVDVAISQGITLPSLESFHPLNIHIGKGKLHATGSKRGKKMTLRPGPVTQEDRCDHLTLKEPFSGEPSEEVKEEGGKPQMNSEGEIPSLPSGSQSAKPVSQPRKSTQPDVCASPQEKPLRTLFHQPEEEIEDGGLFIPMEEQDNEESEKRRKKKKGTKRKRDGRGQEGTLAYDLKLDDMLDRTLEDGAKQHNLTAVNVRNILHEVITNEHVVAMMKAAISETEDMPMFEPKMTRSKLKEVVEKGVVIPTWNISPIKKANEIKPPQFVDIHLEEDDSSDEEYQPDDEEEDETAEESLLESDVESTASSPRGAKKSRLRQSSEMTETDEESGILSEAEKVTTPAIRHISAEVVPMGPPPPPKPKQTRDSTFMEKLHAVDEELASSPVCMDSFQPMDDSLIAFRTRSKMPLKDVPLGQLEAELQAPDITPDMYDPNTADDEDWKMWLGGLMNDDVGNEDEADDDDDPEYNFLEDLDEPDTEDFRTDRAVRITKKEVNELMEELFETFQDEMGFSNMEDDGPEEEECVAEPRPNFNTPQALRFEEPLANLLNEQHRTVKELFEQLKMKKSSAKQLQEVEKVKPQSEKVHQTLILDPAQRKRLQQQMQQHVQLLTQIHLLATCNPNLNPEATTTRIFLKELGTFAQSSIALHHQYNPKFQTLFQPCNLMGAMQLIEDFSTHVSIDCSPHKTVKKTANEFPCLPKQVAWILATSKVFMYPELLPVCSLKAKNPQDKIVFTKAEDNLLALGLKHFEGTEFPNPLISKYLLTCKTAHQLTVRIKNLNMNRAPDNIIKFYKKTKQLPVLGKCCEEIQPHQWKPPIEREEHRLPFWLKASLPSIQEELRHMADGAREVGNMTGTTEINSDRSLEKDNLELGSESRYPLLLPKGVVLKLKPVATRFPRKAWRQKRSSVLKPLLIQPSPSLQPSFNPGKTPARSTHSEAPPSKMVLRIPHPIQPATVLQTVPGVPPLGVSGGESFESPAALPAVPPEARTSFPLSESQTLLSSAPVPKVMLPSLAPSKFRKPYVRRRPSKRRGVKASPCMKPAPVIHHPASVIFTVPATTVKIVSLGGGCNMIQPVNAAVAQSPQTIPITTLLVNPTSFPCPLNQSLVASSVSPLIVSGNSVNLPIPSTPEDKAHVNVDIACAVADGENAFQGLEPKLEPQELSPLSATVFPKVEHSPGPPLADAECQEGLSENSACRWTVVKTEEGRQALEPLPQGIQESLNNPTPGDLEEIVKMEPEEAREEISGSPERDICDDIKVEHAVELDTGAPSEELSSAGEVTKQTVLQKEEERSQPTKTPSSSQEPPDEGTSGTDVNKGSSKNALSSMDPEVRLSSPPGKPEDSSSVDGQSVGTPVGPETGGEKNGPEEEEEEDFDDLTQDEEDEMSSASEESVLSVPELQETMEKLTWLASERRMSQEGESEEENSQEENSEPEEEEEEEAEGMESLQKEDEMTDEAVGDSAEKPPTFASPETAPEVETSRTPPGESIKAAGKGRNNHRARNKRGSRARASKDTSKLLLLYDEDILERDPLREQKDLAFAQAYLTRVREALQHIPGKYEDFLQVIYEFESSTQRRTAVDLYKSLQILLQDWPQLLKDFAAFLLPEQALACGLFEEQQAFEKSRKFLRQLEICFAENPSHHQKIIKVLQGCADCLPQEITELKTQMWQLLKGHDHLQDEFSIFFDHLRPAASRMGDFEEINWTEEKEYEFDGFEEVALPDVEEEEEPPKIPTASKNKRKKEIGVQNHDKETEWPDGAKDCACSCHEGGPDSKLKKSKRRSCSHCSSKVCDSKSYKSKEPHELVGSSPHREASPMPGAKEAGQGKDMMEEEAPEERESTEATQSRTVRTTRKGEMPVSAGLAVGSTLPSPREVTVTERLLLDGPPPHSPETPQFPPTTGAVLYTVKRNQVGPEVRSCPKASPRLQKEREGQKAVSESEALMLVWDASETEKLPGTVEPPASFLSPVSSKTRDAGRRHVSGKPDTQERWLPSSRARVKTRDRTCPVHESPSGIDTSETSPKAPRGGLAKDSGTQAKGPEGEQQPKAAEATVCANNSKVSSTGEKVVLWTREADRVILTMCQEQGAQPQTFNIISQQLGNKTPAEVSHRFRELMQLFHTACEASSEDEDDATSTSNADQLSDHGDLLSEEELDE.

2 disordered regions span residues 1-46 (MLPC…SSVS) and 122-259 (KLHA…GRGQ). A compositionally biased stretch (basic and acidic residues) spans 30–40 (SAVKPESDQVK). The segment covering 122-135 (KLHATGSKRGKKMT) has biased composition (basic residues). Positions 143 to 152 (QEDRCDHLTL) are enriched in basic and acidic residues. Residues 183 to 201 (PSGSQSAKPVSQPRKSTQP) are compositionally biased toward polar residues. A Phosphoserine modification is found at Ser-206. A compositionally biased stretch (basic residues) spans 243–255 (RRKKKKGTKRKRD). Ser-346 carries the post-translational modification Phosphoserine. Positions 366 to 394 (EDDSSDEEYQPDDEEEDETAEESLLESDV) are enriched in acidic residues. Residues 366–460 (EDDSSDEEYQ…PPKPKQTRDS (95 aa)) form a disordered region. Positions 600-1339 (EMGFSNMEDD…EEAREEISGS (740 aa)) are required for interaction with YY1, SIN3A and HDAC1, and transcriptional repression activity. Ser-775 is subject to Phosphoserine. Disordered regions lie at residues 1008–1031 (PSPS…SEAP) and 1111–1131 (RKPY…SPCM). The span at 1111–1125 (RKPYVRRRPSKRRGV) shows a compositional bias: basic residues. Phosphoserine is present on Ser-1268. Disordered stretches follow at residues 1301 to 1320 (ALEP…TPGD) and 1356 to 1601 (LDTG…RARA). Over residues 1386-1416 (PTKTPSSSQEPPDEGTSGTDVNKGSSKNALS) the composition is skewed to polar residues. Ser-1426 is modified (phosphoserine). Polar residues predominate over residues 1434 to 1443 (SSSVDGQSVG). Composition is skewed to acidic residues over residues 1458–1476 (EEEE…EDEM) and 1510–1534 (GESE…EAEG). Residues 1586–1600 (RNNHRARNKRGSRAR) show a composition bias toward basic residues. 2 consecutive PAH domains span residues 1624 to 1696 (EQKD…LLPE) and 1706 to 1777 (EQQA…FDHL). Residues 1809 to 1960 (PDVEEEEEPP…AVGSTLPSPR (152 aa)) are disordered. 2 stretches are compositionally biased toward basic and acidic residues: residues 1836–1848 (NHDK…DGAK) and 1879–1901 (CDSK…HREA). Phosphoserine occurs at positions 1896, 1902, and 1977. Disordered stretches follow at residues 2002 to 2025 (EVRS…AVSE), 2039 to 2149 (EKLP…VSST), and 2208 to 2241 (CEAS…ELDE). Ser-2107 is subject to Phosphoserine. Polar residues predominate over residues 2140–2149 (CANNSKVSST). Residues 2148 to 2201 (STGEKVVLWTREADRVILTMCQEQGAQPQTFNIISQQLGNKTPAEVSHRFRELM) form the Myb-like domain.

As to quaternary structure, found in a complex with YY1, SIN3A and HDAC1.

It is found in the nucleus. In terms of biological role, has transcriptional repressor activity, probably as part of a complex with YY1, SIN3A and HDAC1. Required for B cell lymphopoiesis. The protein is GON-4-like protein (GON4L) of Homo sapiens (Human).